A 99-amino-acid chain; its full sequence is Large ribosomal subunit protein eL30 (99 aa).

The protein belongs to the eukaryotic ribosomal protein eL30 family.

The chain is Large ribosomal subunit protein eL30 (rpl30e) from Pyrococcus horikoshii (strain ATCC 700860 / DSM 12428 / JCM 9974 / NBRC 100139 / OT-3).